The chain runs to 138 residues: uncharacterized protein (138 aa).

The interval 84–104 is disordered; the sequence is PPKKTSPATSSSLKPRPGPRG. Residues 85-98 show a composition bias toward low complexity; that stretch reads PKKTSPATSSSLKP.

The protein to M.pneumoniae MPN_413 and MPN_463.

This is an uncharacterized protein from Mycoplasma pneumoniae (strain ATCC 29342 / M129 / Subtype 1) (Mycoplasmoides pneumoniae).